We begin with the raw amino-acid sequence, 73 residues long: Omega-conotoxin GVIA (73 aa).

An N-terminal signal peptide occupies residues 1 to 22 (MKLTCVVIVAVLLLTACQLITA). Positions 23-45 (DDSRGTQKHRALGSTTELSLSTR) are excised as a propeptide. Intrachain disulfides connect C46-C61, C53-C64, and C60-C71. 4-hydroxyproline is present on residues P49, P55, and P66. Residue Y72 is modified to Tyrosine amide; in form omega-conotoxin GVIA.

This sequence belongs to the conotoxin O1 superfamily. In terms of tissue distribution, expressed by the venom duct.

The protein localises to the secreted. Its function is as follows. Omega-conotoxins act at presynaptic membranes, they bind and block voltage-gated calcium channels (Cav). This toxin blocks N-type calcium channels (Cav2.2/CACNA1B) with a high potency (it displaces [125I]GVIA with an IC(50)=3.7-38 pM). This Conus geographus (Geography cone) protein is Omega-conotoxin GVIA.